We begin with the raw amino-acid sequence, 216 residues long: Cytochrome c oxidase subunit 2 (216 aa).

The Mitochondrial intermembrane portion of the chain corresponds to 1 to 8 (LGLQNATS). Residues 9–39 (PIMEELIAFHDHALMIIFLISSLVLYIISLM) form a helical membrane-spanning segment. The Mitochondrial matrix segment spans residues 40–53 (LTTKLTHTSTMNAQ). Residues 54 to 81 (EIEMIWTILPAVILIMIALPSLRILYMT) traverse the membrane as a helical segment. Topologically, residues 82-216 (DEFNKPYLTL…FIYFQDFEVW (135 aa)) are mitochondrial intermembrane. Cu cation is bound by residues His-155, Cys-190, Glu-192, Cys-194, His-198, and Met-201. Mg(2+) is bound at residue Glu-192.

Belongs to the cytochrome c oxidase subunit 2 family. In terms of assembly, component of the cytochrome c oxidase (complex IV, CIV), a multisubunit enzyme composed of 14 subunits. The complex is composed of a catalytic core of 3 subunits MT-CO1, MT-CO2 and MT-CO3, encoded in the mitochondrial DNA, and 11 supernumerary subunits COX4I, COX5A, COX5B, COX6A, COX6B, COX6C, COX7A, COX7B, COX7C, COX8 and NDUFA4, which are encoded in the nuclear genome. The complex exists as a monomer or a dimer and forms supercomplexes (SCs) in the inner mitochondrial membrane with NADH-ubiquinone oxidoreductase (complex I, CI) and ubiquinol-cytochrome c oxidoreductase (cytochrome b-c1 complex, complex III, CIII), resulting in different assemblies (supercomplex SCI(1)III(2)IV(1) and megacomplex MCI(2)III(2)IV(2)). Found in a complex with TMEM177, COA6, COX18, COX20, SCO1 and SCO2. Interacts with TMEM177 in a COX20-dependent manner. Interacts with COX20. Interacts with COX16. Requires Cu cation as cofactor.

Its subcellular location is the mitochondrion inner membrane. It catalyses the reaction 4 Fe(II)-[cytochrome c] + O2 + 8 H(+)(in) = 4 Fe(III)-[cytochrome c] + 2 H2O + 4 H(+)(out). Its function is as follows. Component of the cytochrome c oxidase, the last enzyme in the mitochondrial electron transport chain which drives oxidative phosphorylation. The respiratory chain contains 3 multisubunit complexes succinate dehydrogenase (complex II, CII), ubiquinol-cytochrome c oxidoreductase (cytochrome b-c1 complex, complex III, CIII) and cytochrome c oxidase (complex IV, CIV), that cooperate to transfer electrons derived from NADH and succinate to molecular oxygen, creating an electrochemical gradient over the inner membrane that drives transmembrane transport and the ATP synthase. Cytochrome c oxidase is the component of the respiratory chain that catalyzes the reduction of oxygen to water. Electrons originating from reduced cytochrome c in the intermembrane space (IMS) are transferred via the dinuclear copper A center (CU(A)) of subunit 2 and heme A of subunit 1 to the active site in subunit 1, a binuclear center (BNC) formed by heme A3 and copper B (CU(B)). The BNC reduces molecular oxygen to 2 water molecules using 4 electrons from cytochrome c in the IMS and 4 protons from the mitochondrial matrix. The protein is Cytochrome c oxidase subunit 2 (MT-CO2) of Callimico goeldii (Goeldi's marmoset).